The following is a 185-amino-acid chain: uncharacterized protein (185 aa).

Residues 1–56 (MSSFTIPSPSSFSLSNSYNQTSPHSFTLRNSRSNFEFHRLRLDVESRRRSTSLRSN) constitute a chloroplast transit peptide. A disordered region spans residues 48–67 (RRSTSLRSNCSTKGTDSGEN). Polar residues predominate over residues 52–64 (SLRSNCSTKGTDS). Positions 105–138 (QAEQQKQVQEIQEEVLERAKKAKERAARETMEEQ) form a coiled coil.

It localises to the plastid. It is found in the chloroplast. The protein resides in the plastoglobule. This is an uncharacterized protein from Arabidopsis thaliana (Mouse-ear cress).